The primary structure comprises 447 residues: Serine/threonine-protein phosphatase 2A 55 kDa regulatory subunit B alpha isoform (447 aa).

At Ala2 the chain carries N-acetylalanine. 7 WD repeats span residues 11 to 80 (QWCF…FQSH), 94 to 174 (EKIN…IFAN), 175 to 218 (AHTY…VDIK), 227 to 270 (EVIT…KLFE), 288 to 325 (ISDV…TYQV), 347 to 381 (ECCW…TLEA), and 414 to 446 (DFNK…QDKV).

The protein belongs to the phosphatase 2A regulatory subunit B family. In terms of assembly, PP2A consists of a common heterodimeric core enzyme, composed of a 36 kDa catalytic subunit (subunit C) and a 65 kDa constant regulatory subunit (PR65 or subunit A), that associates with a variety of regulatory subunits. Proteins that associate with the core dimer include three families of regulatory subunits B (the R2/B/PR55/B55, R3/B''/PR72/PR130/PR59 and R5/B'/B56 families), the 48 kDa variable regulatory subunit, viral proteins, and cell signaling molecules. Interacts with the PP2A C catalytic subunit PPP2CA. Interacts with the PP2A A subunit PPP2R1A. Found in a complex with at least ARL2, PPP2CB, PPP2R1A, PPP2R2A, PPP2R5E and TBCD. Interacts with MFHAS1; the interaction is direct. Interacts with PABIR1/FAM122A (via its N-terminus); the interaction is direct and inhibits PP2A activity. Interacts with ARPP19; the interaction is direct and inhibits PP2A activity. Interacts with CRTC3. Brain.

In terms of biological role, substrate-recognition subunit of protein phosphatase 2A (PP2A) that plays a key role in cell cycle by controlling mitosis entry and exit. Involved in chromosome clustering during late mitosis by mediating dephosphorylation of MKI67. Essential for serine/threonine-protein phosphatase 2A-mediated dephosphorylation of WEE1, preventing its ubiquitin-mediated proteolysis, increasing WEE1 protein levels, and promoting the G2/M checkpoint. The polypeptide is Serine/threonine-protein phosphatase 2A 55 kDa regulatory subunit B alpha isoform (Ppp2r2a) (Rattus norvegicus (Rat)).